The primary structure comprises 250 residues: Small ribosomal subunit protein uS3 (250 aa).

Positions 39–111 (IRTLIKNNYP…KVQINIFEVK (73 aa)) constitute a KH type-2 domain.

The protein belongs to the universal ribosomal protein uS3 family. Part of the 30S ribosomal subunit. Forms a tight complex with proteins S10 and S14.

In terms of biological role, binds the lower part of the 30S subunit head. Binds mRNA in the 70S ribosome, positioning it for translation. In Alder yellows phytoplasma, this protein is Small ribosomal subunit protein uS3.